We begin with the raw amino-acid sequence, 122 residues long: Small ribosomal subunit protein bS6 (122 aa).

The protein belongs to the bacterial ribosomal protein bS6 family.

Functionally, binds together with bS18 to 16S ribosomal RNA. This Trichlorobacter lovleyi (strain ATCC BAA-1151 / DSM 17278 / SZ) (Geobacter lovleyi) protein is Small ribosomal subunit protein bS6.